Here is a 1258-residue protein sequence, read N- to C-terminus: MNYIPTQTFYGRRWRPRPAARPWVAPPPVYYPPPPPVPVDPQAQQMQQLIAAVNTLAIRQNGTRTPGQQRRKRQPNKPKRKQTPPKKQNPAKTKNKQKPQPPKPKKRKPGKRERKCMKIENDCIFEVKLEGKVTGYACLVGDKVMKPAHVKGVIDNPDLAKLAFKKSSKYDLECAQIPVHMKSDASQFTHEKPEGHYNWHHGAVQYLNGRFTIPTGAGKPGDSGRPIFDNKGRVVAIVLGGANEGARTALSVVTWNKDMVTRITPEGTEEWTALVTTACILSNLTFDCSLPPCAPCCYEKDAEGTLRMLEDNVDNPGYYDLLAASTHCDAPQRRRRRGLTEDYKAYKLTKPYIAYCSDCGNGQFCYSPIAIERVRAEASDGMLKIQISAQIGLQVDGAHSWTKIRYMKGHDVEDTDRNSLEVFTTGECTVHGTMGHFIVATCPEGDSLTVAFVDKHKVRHACRIAYKHRVPVLGREHFTVRPHHGVELPCTTYAMRTSVTTEEIEMHVAHDVPDNTFLSKTGNKVKITPKGKSIRYNCTCGSKESGVTKQDKEFDNCEVSQCHTMVTAHDKWQFNSPYVPRAGSGKKGKIHVPFPLSNSTCRVPLAPLPNTIPAKNGITLQLHPVAPTLLTYRTLGEKPEHHTEWISESCERTLPVPEEGLEYTWGNHAPVRLWAQLTTKGSAHGMPHEIFSYYYGLYPATTVAVCVGLACVILLALSASCCLCVSARNKCLTPYALTPGAVVPCTLSLLCCAPRAKAATFAETAAYLWAENQTVFWMQFAIPVACFMIVTYCLRHLMLCCRTASFLVAVSLGMGATQAYEHSVTLPNAVGFPYRAHVDRPGFSPLTLHMEVVSTSLEPTLALDYVTCEYKTVVPSPKVTCCGMSECAHQQKADFQCKVYTGVYPFLWGGAYCFCDSENTQLSEAYVERSEVCKHDHAAAYRAHTAALKAKISVTYGSTNGTAEAFVNGESTARIGDLKMILGPISTAWSPFDPKIVVYKDEVYNQDYPPYGSGQPGRFGDLQSRTTESNDVYANTALKLARPSAGTVHVPYTQTPSGFKYWLKEKGDALNHKAPFGCIIKTNPVRAENCAVGNIPVSLDIPDAAFTRIVDAPSLTGLKCEVATCTHSSDFGGTLVVEYKTDKVGTCAVHSESNTAVMQETSLSVTMDGRGTLHFSTASASPSFVLKVCSSKTTCTAKCVPPKDHVVPFPANHNNVVFPDFSSTAVSWLTHTMGGATVVIAIGITIFLIVTCIAFSRH.

Residues 41–75 (PQAQQMQQLIAAVNTLAIRQNGTRTPGQQRRKRQP) form a host transcription inhibition region. Residues 59 to 114 (RQNGTRTPGQQRRKRQPNKPKRKQTPPKKQNPAKTKNKQKPQPPKPKKRKPGKRER) are disordered. Residues 68 to 109 (QQRRKRQPNKPKRKQTPPKKQNPAKTKNKQKPQPPKPKKRKP) carry the Nuclear localization signal motif. Basic residues-rich tracts occupy residues 69–84 (QRRK…KQTP) and 93–114 (TKNK…KRER). The binding to the viral RNA stretch occupies residues 96 to 124 (KQKPQPPKPKKRKPGKRERKCMKIENDCI). Positions 109-123 (PGKRERKCMKIENDC) are ribosome-binding. C123 and C138 are disulfide-bonded. Positions 123–271 (CIFEVKLEGK…RITPEGTEEW (149 aa)) constitute a Peptidase S3 domain. The active-site Charge relay system is the H149. The Nuclear export signal signature appears at 154 to 164 (IDNPDLAKLAF). The segment at 165-170 (KKSSKY) is interaction with spike glycoprotein E2. The active-site Charge relay system is the D171. The interval 193–203 (PEGHYNWHHGA) is dimerization of the capsid protein. S223 (charge relay system) is an active-site residue. The tract at residues 229–233 (DNKGR) is dimerization of the capsid protein. Positions 272–284 (TALVTTACILSNL) are functions as an uncleaved signal peptide for the precursor of protein E3/E2. Disulfide bonds link C279–C288, C293–C297, C296–C328, C356–C462, C359–C365, C428–C442, C490–C601, C538–C562, and C540–C557. N-linked (GlcNAc...) asparagine; by host glycosylation occurs at N283. The Extracellular portion of the chain corresponds to 338-696 (GLTEDYKAYK…PHEIFSYYYG (359 aa)). Interaction with host Mxra8 receptor stretches follow at residues 363–366 (QFCY) and 399–401 (HSW). The interaction with host Mxra8 receptor stretch occupies residues 521–524 (TGNK). N537 carries N-linked (GlcNAc...) asparagine; by host glycosylation. Residues 553 to 559 (EFDNCEV) form an interaction with host Mxra8 receptor region. N598 is a glycosylation site (N-linked (GlcNAc...) asparagine; by host). Residues 697-717 (LYPATTVAVCVGLACVILLAL) traverse the membrane as a helical segment. The Cytoplasmic segment spans residues 718-758 (SASCCLCVSARNKCLTPYALTPGAVVPCTLSLLCCAPRAKA). The tract at residues 726–730 (SARNK) is interaction with the capsid protein. Residues C731, C751, and C752 are each lipidated (S-palmitoyl cysteine; by host). The segment at 731-751 (CLTPYALTPGAVVPCTLSLLC) is transient transmembrane before p62-6K protein processing. C731 and C752 are joined by a disulfide. Residues 759–773 (ATFAETAAYLWAENQ) are Extracellular-facing. The helical transmembrane segment at 774–794 (TVFWMQFAIPVACFMIVTYCL) threads the bilayer. The Cytoplasmic portion of the chain corresponds to 795-796 (RH). Residues 797–817 (LMLCCRTASFLVAVSLGMGAT) traverse the membrane as a helical segment. 2 consecutive stretches face the extracellular side: residues 818–819 (QA) and 820–1234 (YEHS…HTMG). 4 disulfide bridges follow: C868–C933, C881–C913, C882–C915, and C887–C897. The tract at residues 903 to 920 (VYPFLWGGAYCFCDSENT) is E1 fusion peptide loop. N960 and N1089 each carry an N-linked (GlcNAc...) asparagine; by host glycan. 4 cysteine pairs are disulfide-bonded: C1078–C1090, C1120–C1195, C1125–C1199, and C1147–C1189. The helical transmembrane segment at 1235 to 1255 (GATVVIAIGITIFLIVTCIAF) threads the bilayer. C1252 is lipidated: S-palmitoyl cysteine; by host. At 1256–1258 (SRH) the chain is on the cytoplasmic side.

As to quaternary structure, homodimer. Homomultimer. Interacts with host karyopherin KPNA4; this interaction allows the nuclear import of the viral capsid protein. Interacts with spike glycoprotein E2. Interacts with host IRAK1; the interaction leads to inhibition of IRAK1-dependent signaling. The precursor of protein E3/E2 and E1 form a heterodimer shortly after synthesis. In terms of assembly, the precursor of protein E3/E2 and E1 form a heterodimer shortly after synthesis. Processing of the precursor of protein E3/E2 into E2 and E3 results in a heterodimer of the spike glycoproteins E2 and E1. Spike at virion surface are constituted of a trimer of E2-E1 heterodimers. After target cell attachment and endocytosis, E1 change conformation to form homotrimers. Interacts with 6K protein. As to quaternary structure, interacts with spike glycoprotein E1. Processing of the precursor of protein E3/E2 into E2 and E3 results in a heterodimer of the spike glycoproteins E2 and E1. Spike at virion surface are constituted of a trimer of E2-E1 heterodimers. Interacts with 6K protein. Interacts with host MXRA8; this interaction mediates virus entry. Oligomer. Interacts with spike glycoprotein E1. Interacts with spike glycoprotein E2. Post-translationally, structural polyprotein: Specific enzymatic cleavages in vivo yield mature proteins. Capsid protein is auto-cleaved during polyprotein translation, unmasking a signal peptide at the N-terminus of the precursor of E3/E2. The remaining polyprotein is then targeted to the host endoplasmic reticulum, where host signal peptidase cleaves it into pE2, 6K and E1 proteins. pE2 is further processed to mature E3 and E2 by host furin in trans-Golgi vesicle. In terms of processing, palmitoylated via thioester bonds. These palmitoylations may induce disruption of the C-terminus transmembrane. This would result in the reorientation of E2 C-terminus from lumenal to cytoplasmic side. N-glycosylated. Post-translationally, palmitoylated via thioester bonds.

It localises to the virion. The protein resides in the host cytoplasm. Its subcellular location is the host cell membrane. The protein localises to the host nucleus. It is found in the virion membrane. It localises to the host Golgi apparatus. The protein resides in the host trans-Golgi network. Its subcellular location is the host endoplasmic reticulum. It carries out the reaction Autocatalytic release of the core protein from the N-terminus of the togavirus structural polyprotein by hydrolysis of a -Trp-|-Ser- bond.. Functionally, forms an icosahedral capsid with a T=4 symmetry composed of 240 copies of the capsid protein surrounded by a lipid membrane through which penetrate 80 spikes composed of trimers of E1-E2 heterodimers. The capsid protein binds to the viral RNA genome at a site adjacent to a ribosome binding site for viral genome translation following genome release. Possesses a protease activity that results in its autocatalytic cleavage from the nascent structural protein. Following its self-cleavage, the capsid protein transiently associates with ribosomes, and within several minutes the protein binds to viral RNA and rapidly assembles into icosahedric core particles. The resulting nucleocapsid eventually associates with the cytoplasmic domain of the spike glycoprotein E2 at the cell membrane, leading to budding and formation of mature virions. In case of infection, new virions attach to target cells and after clathrin-mediated endocytosis their membrane fuses with the host endosomal membrane. This leads to the release of the nucleocapsid into the cytoplasm, followed by an uncoating event necessary for the genomic RNA to become accessible. The uncoating might be triggered by the interaction of capsid proteins with ribosomes. Binding of ribosomes would release the genomic RNA since the same region is genomic RNA-binding and ribosome-binding. Specifically inhibits interleukin-1 receptor-associated kinase 1/IRAK1-dependent signaling during viral entry, representing a means by which the alphaviruses may evade innate immune detection and activation prior to viral gene expression. In terms of biological role, provides the signal sequence for the translocation of the precursor of protein E3/E2 to the host endoplasmic reticulum. Furin-cleaved E3 remains associated with spike glycoprotein E1 and mediates pH protection of the latter during the transport via the secretory pathway. After virion release from the host cell, the assembly protein E3 is gradually released in the extracellular space. Plays a role in viral attachment to target host cell, by binding to the cell receptor MXRA8. Synthesized as a p62 precursor which is processed by furin at the cell membrane just before virion budding, giving rise to E2-E1 heterodimer. The p62-E1 heterodimer is stable, whereas E2-E1 is unstable and dissociate at low pH. p62 is processed at the last step, presumably to avoid E1 fusion activation before its final export to cell surface. E2 C-terminus contains a transitory transmembrane that would be disrupted by palmitoylation, resulting in reorientation of the C-terminal tail from lumenal to cytoplasmic side. This step is critical since E2 C-terminus is involved in budding by interacting with capsid proteins. This release of E2 C-terminus in cytoplasm occurs lately in protein export, and precludes premature assembly of particles at the endoplasmic reticulum membrane. Its function is as follows. Acts as a viroporin that participates in virus glycoprotein processing and transport to the plasma membrane, cell permeabilization and budding of viral particles. Disrupts the calcium homeostasis of the cell, probably at the endoplasmic reticulum level. This leads to cytoplasmic calcium elevation. Because of its lipophilic properties, the 6K protein is postulated to influence the selection of lipids that interact with the transmembrane domains of the glycoproteins, which, in turn, affects the deformability of the bilayer required for the extreme curvature that occurs as budding proceeds. Present in low amount in virions, about 3% compared to viral glycoproteins. Functionally, class II viral fusion protein. Fusion activity is inactive as long as E1 is bound to E2 in mature virion. After virus attachment to target cell and endocytosis, acidification of the endosome induce dissociation of E1/E2 heterodimer and concomitant trimerization of the E1 subunits. This E1 trimer is fusion active, and promotes release of viral nucleocapsid in cytoplasm after endosome and viral membrane fusion. Efficient fusion requires the presence of cholesterol and sphingolipid in the target membrane. In Middelburg virus, this protein is Structural polyprotein.